Consider the following 230-residue polypeptide: Protein RESPONSE TO ABA AND SALT 1 (230 aa).

Residues 7–230 (SQSFTIFVDG…RLRDRDQERA (224 aa)) form the DOG1 domain.

Functionally, negative regulator of salt (NaCl) tolerance probably by enhancing abscisic acid (ABA) sensitivity. The chain is Protein RESPONSE TO ABA AND SALT 1 from Arabidopsis thaliana (Mouse-ear cress).